A 188-amino-acid polypeptide reads, in one-letter code: Peptidyl-tRNA hydrolase (188 aa).

Tyrosine 14 is a tRNA binding site. Histidine 19 functions as the Proton acceptor in the catalytic mechanism. TRNA is bound by residues tyrosine 64, asparagine 66, and asparagine 112.

This sequence belongs to the PTH family. As to quaternary structure, monomer.

The protein resides in the cytoplasm. It catalyses the reaction an N-acyl-L-alpha-aminoacyl-tRNA + H2O = an N-acyl-L-amino acid + a tRNA + H(+). In terms of biological role, hydrolyzes ribosome-free peptidyl-tRNAs (with 1 or more amino acids incorporated), which drop off the ribosome during protein synthesis, or as a result of ribosome stalling. Functionally, catalyzes the release of premature peptidyl moieties from peptidyl-tRNA molecules trapped in stalled 50S ribosomal subunits, and thus maintains levels of free tRNAs and 50S ribosomes. The chain is Peptidyl-tRNA hydrolase from Bacillus pumilus (strain SAFR-032).